The chain runs to 379 residues: DNA replication and repair protein RecF (379 aa).

30-37 is an ATP binding site; sequence GKNAQGKT.

Belongs to the RecF family.

The protein localises to the cytoplasm. The RecF protein is involved in DNA metabolism; it is required for DNA replication and normal SOS inducibility. RecF binds preferentially to single-stranded, linear DNA. It also seems to bind ATP. This is DNA replication and repair protein RecF from Ligilactobacillus salivarius (strain UCC118) (Lactobacillus salivarius).